The following is a 235-amino-acid chain: uncharacterized protein (235 aa).

Disordered regions lie at residues 1-47 and 78-128; these read MSHK…QSTN and QEHH…KQPQ. Over residues 20–33 the composition is skewed to polar residues; that stretch reads HPPGQSLSSISWSP. Residues 84–98 are compositionally biased toward low complexity; that stretch reads QQQQQQRQNIRSQNS. Residues 106 to 128 show a composition bias toward polar residues; it reads VQESQWTSSASNSSLKKQEKQPQ.

This is an uncharacterized protein from Saccharomyces cerevisiae (strain ATCC 204508 / S288c) (Baker's yeast).